The following is a 223-amino-acid chain: Riboflavin kinase (223 aa).

A unknown region spans residues 1–89; that stretch reads MHRINALKHL…KHIFCGDEDK (89 aa). The riboflavin kinase stretch occupies residues 90–223; that stretch reads VELYGNVITG…IMIEDRSACE (134 aa). A CDP-binding site is contributed by 99–104; sequence GLGEGQ. Mg(2+)-binding residues include T128 and N130. The FMN site is built by S185 and E193. 198–201 is a CDP binding site; that stretch reads VHLR.

It belongs to the archaeal riboflavin kinase family. The cofactor is Mg(2+).

It carries out the reaction riboflavin + CTP = CDP + FMN + H(+). Its pathway is cofactor biosynthesis; FMN biosynthesis; FMN from riboflavin (CTP route): step 1/1. In terms of biological role, catalyzes the CTP-dependent phosphorylation of riboflavin (vitamin B2) to form flavin mononucleotide (FMN). The polypeptide is Riboflavin kinase (ribK) (Methanococcoides burtonii (strain DSM 6242 / NBRC 107633 / OCM 468 / ACE-M)).